The chain runs to 44 residues: Large ribosomal subunit protein bL34 (44 aa).

A disordered region spans residues 21-44 (RMDTSGGRRILSARRRKGRKTISA). Over residues 31–44 (LSARRRKGRKTISA) the composition is skewed to basic residues.

This sequence belongs to the bacterial ribosomal protein bL34 family.

This Endomicrobium trichonymphae protein is Large ribosomal subunit protein bL34.